We begin with the raw amino-acid sequence, 288 residues long: Galactose/N-acetyl-D-galactosamine lectin light subunit 1 (288 aa).

The N-terminal stretch at 1 to 15 (MIILVLLISYSFGKT) is a signal peptide. N-linked (GlcNAc...) asparagine glycans are attached at residues asparagine 205 and asparagine 261.

In terms of assembly, heterodimer composed of a 170 kDa heavy subunit (hgl) and a 31/35 kDa light subunit (lgl); disulfide-linked.

The protein resides in the cell membrane. Its function is as follows. Light subunit of a heterodimeric lectin; the heavy subunit binds galactose and N-acetyl-D-galactosamine of host glycoproteins and thus mediates adhesion to host cells. The chain is Galactose/N-acetyl-D-galactosamine lectin light subunit 1 from Entamoeba histolytica (strain ATCC 30459 / HM-1:IMSS / ABRM).